We begin with the raw amino-acid sequence, 73 residues long: Translation initiation factor IF-1 (73 aa).

An S1-like domain is found at 1–73 (MANKEELIEF…TKGRITYRAR (73 aa)).

It belongs to the IF-1 family. Component of the 30S ribosomal translation pre-initiation complex which assembles on the 30S ribosome in the order IF-2 and IF-3, IF-1 and N-formylmethionyl-tRNA(fMet); mRNA recruitment can occur at any time during PIC assembly.

It localises to the cytoplasm. Its function is as follows. One of the essential components for the initiation of protein synthesis. Stabilizes the binding of IF-2 and IF-3 on the 30S subunit to which N-formylmethionyl-tRNA(fMet) subsequently binds. Helps modulate mRNA selection, yielding the 30S pre-initiation complex (PIC). Upon addition of the 50S ribosomal subunit IF-1, IF-2 and IF-3 are released leaving the mature 70S translation initiation complex. This chain is Translation initiation factor IF-1, found in Acinetobacter baumannii (strain ATCC 17978 / DSM 105126 / CIP 53.77 / LMG 1025 / NCDC KC755 / 5377).